The primary structure comprises 497 residues: Sestrin homolog (497 aa).

A phosphoserine mark is found at S185 and S190. Over residues 226-241 (NANPDYDSQTAASSNG) the composition is skewed to polar residues. A disordered region spans residues 226–255 (NANPDYDSQTAASSNGGAPPDSANAVADGP).

This sequence belongs to the sestrin family. As to quaternary structure, associates with the GATOR2 complex; the interaction is probably direct. Associates with the GATOR1 complex; the interaction is probably indirect and mediated by the GATOR2 complex. In terms of tissue distribution, highly expressed in muscle-enriched tissues (at protein level).

The protein resides in the nucleus. It is found in the cytoplasm. In terms of biological role, functions as a negative feedback regulator of mTOR function. The protein is Sestrin homolog of Drosophila melanogaster (Fruit fly).